A 142-amino-acid chain; its full sequence is MAAVVAVCGGLGRKKLTHLVTAAVSLTHPGTHTVLWRRGCSQQVSSNEDLPISMENPYKEPLKKCILCGKHVDYKNVQLLSQFVSPFTGCIYGRHITGLCGKKQKEITKAIKRAQIMGFMPVTYKDPAYLKDPKVCNIRYRE.

The protein belongs to the bacterial ribosomal protein bS18 family. As to quaternary structure, component of the mitochondrial small ribosomal subunit (mt-SSU). Mature mammalian 55S mitochondrial ribosomes consist of a small (28S) and a large (39S) subunit. The 28S small subunit contains a 12S ribosomal RNA (12S mt-rRNA) and 30 different proteins. The 39S large subunit contains a 16S rRNA (16S mt-rRNA), a copy of mitochondrial valine transfer RNA (mt-tRNA(Val)), which plays an integral structural role, and 52 different proteins. bS18m has a zinc binding site.

It is found in the mitochondrion. This chain is Small ribosomal subunit protein bS18m (MRPS18C), found in Homo sapiens (Human).